Reading from the N-terminus, the 704-residue chain is DNA ligase (704 aa).

NAD(+) contacts are provided by residues 43–47, 92–93, and glutamate 124; these read DADYD and SL. Lysine 126 functions as the N6-AMP-lysine intermediate in the catalytic mechanism. The NAD(+) site is built by arginine 147, glutamate 182, lysine 298, and lysine 322. Cysteine 427, cysteine 430, cysteine 445, and cysteine 451 together coordinate Zn(2+). Residues 625 to 704 enclose the BRCT domain; sequence PVESPIAGKI…DAWLRLIGDA (80 aa).

The protein belongs to the NAD-dependent DNA ligase family. LigA subfamily. Mg(2+) is required as a cofactor. The cofactor is Mn(2+).

It catalyses the reaction NAD(+) + (deoxyribonucleotide)n-3'-hydroxyl + 5'-phospho-(deoxyribonucleotide)m = (deoxyribonucleotide)n+m + AMP + beta-nicotinamide D-nucleotide.. Functionally, DNA ligase that catalyzes the formation of phosphodiester linkages between 5'-phosphoryl and 3'-hydroxyl groups in double-stranded DNA using NAD as a coenzyme and as the energy source for the reaction. It is essential for DNA replication and repair of damaged DNA. This is DNA ligase from Cereibacter sphaeroides (strain ATCC 17025 / ATH 2.4.3) (Rhodobacter sphaeroides).